The chain runs to 85 residues: UPF0386 protein Arad_1912 (85 aa).

The protein belongs to the UPF0386 family.

This is UPF0386 protein Arad_1912 from Rhizobium rhizogenes (strain K84 / ATCC BAA-868) (Agrobacterium radiobacter).